A 187-amino-acid chain; its full sequence is NADH-quinone oxidoreductase subunit B (187 aa).

[4Fe-4S] cluster-binding residues include C46, C47, C112, and C141.

Belongs to the complex I 20 kDa subunit family. NDH-1 is composed of 14 different subunits. Subunits NuoB, C, D, E, F, and G constitute the peripheral sector of the complex. [4Fe-4S] cluster is required as a cofactor.

The protein localises to the cell inner membrane. It catalyses the reaction a quinone + NADH + 5 H(+)(in) = a quinol + NAD(+) + 4 H(+)(out). NDH-1 shuttles electrons from NADH, via FMN and iron-sulfur (Fe-S) centers, to quinones in the respiratory chain. The immediate electron acceptor for the enzyme in this species is believed to be ubiquinone. Couples the redox reaction to proton translocation (for every two electrons transferred, four hydrogen ions are translocated across the cytoplasmic membrane), and thus conserves the redox energy in a proton gradient. The polypeptide is NADH-quinone oxidoreductase subunit B (Myxococcus xanthus (strain DK1622)).